A 481-amino-acid polypeptide reads, in one-letter code: RuvB-like helicase 2 (481 aa).

73–80 (GEPSTGKT) is an ATP binding site. The segment at 453 to 481 (EEVERDPAAGGGAKRRVEGGGGDAQPMEH) is disordered.

The protein belongs to the RuvB family. In terms of assembly, forms homohexameric rings. May form a dodecamer with rept made of two stacked hexameric rings. Component of the chromatin remodeling Ino80 complex. Interacts with Myc and pont. As to expression, higher expression occurs in primordia of mesoderm, anterior and posterior midgut and cephalic furrow early in gastrulation, as well as in endoderm and mesoderm lineages during germ band extension. Later in development expression is only maintained in endoderm cells. Expressed in thoracic and abdominal segment neural precursors of all embryonic chordotonal organs.

It is found in the nucleus. The catalysed reaction is ATP + H2O = ADP + phosphate + H(+). In terms of biological role, acts as a transcriptional coactivator in Wg signaling caused by altered arm signaling. Pont and rept interfere antagonistically with nuclear arm signaling function, and are required to enhance or reduce arm activity, respectively. Also an essential cofactor for the normal function of Myc; required for cellular proliferation and growth. Its function is as follows. Proposed core component of the chromatin remodeling Ino80 complex which is involved in transcriptional regulation, DNA replication and probably DNA repair. In Drosophila melanogaster (Fruit fly), this protein is RuvB-like helicase 2.